The chain runs to 444 residues: Phosphoglucosamine mutase (444 aa).

Ser-104 functions as the Phosphoserine intermediate in the catalytic mechanism. Mg(2+)-binding residues include Ser-104, Asp-243, Asp-245, and Asp-247. Ser-104 is subject to Phosphoserine.

Belongs to the phosphohexose mutase family. Mg(2+) is required as a cofactor. In terms of processing, activated by phosphorylation.

It carries out the reaction alpha-D-glucosamine 1-phosphate = D-glucosamine 6-phosphate. Functionally, catalyzes the conversion of glucosamine-6-phosphate to glucosamine-1-phosphate. The sequence is that of Phosphoglucosamine mutase from Neisseria meningitidis serogroup A / serotype 4A (strain DSM 15465 / Z2491).